We begin with the raw amino-acid sequence, 263 residues long: uncharacterized protein (263 aa).

This is an uncharacterized protein from Bacillus subtilis (strain 168).